The primary structure comprises 63 residues: Metallothionein-like protein type 3 (63 aa).

It belongs to the metallothionein superfamily. Type 15 family.

Metallothioneins have a high content of cysteine residues that bind various heavy metals. This Actinidia deliciosa (Kiwi) protein is Metallothionein-like protein type 3.